The following is a 185-amino-acid chain: Biofilm operon icaADBC HTH-type negative transcriptional regulator IcaR (185 aa).

Residues 1–59 (MKDKIIDNAITLFSEKGYDGTTLDDISKSVNIKKASLYYHYDNKEEIYRKSVENCFNYF) enclose the HTH tetR-type domain. A DNA-binding region (H-T-H motif) is located at residues 22 to 41 (TLDDISKSVNIKKASLYYHY).

As to quaternary structure, homodimer.

Functionally, represses transcription of the icaADBC operon necessary for biofilm production. This is Biofilm operon icaADBC HTH-type negative transcriptional regulator IcaR (icaR) from Staphylococcus epidermidis (strain ATCC 35984 / DSM 28319 / BCRC 17069 / CCUG 31568 / BM 3577 / RP62A).